Here is a 991-residue protein sequence, read N- to C-terminus: Integrator complex subunit 8 (991 aa).

Residues 1–10 (MSAEAADREA) show a composition bias toward basic and acidic residues. The segment at 1-22 (MSAEAADREAATSSRPCTPPQT) is disordered. Over residues 11–22 (ATSSRPCTPPQT) the composition is skewed to polar residues. Residues 24-29 (WFEFLL) carry the WFEF motif motif. 4 TPR repeats span residues 250–288 (CQGC…VSKI), 319–355 (SQPA…SLPD), 569–602 (VYIL…VTEF), and 829–862 (HSWL…CSDF).

The protein belongs to the Integrator subunit 8 family. Component of the Integrator complex, composed of core subunits INTS1, INTS2, INTS3, INTS4, INTS5, INTS6, INTS7, INTS8, INTS9/RC74, INTS10, INTS11/CPSF3L, INTS12, INTS13, INTS14 and INTS15. The core complex associates with protein phosphatase 2A subunits PPP2CA and PPP2R1A, to form the Integrator-PP2A (INTAC) complex.

Its subcellular location is the nucleus. It localises to the chromosome. Component of the integrator complex, a multiprotein complex that terminates RNA polymerase II (Pol II) transcription in the promoter-proximal region of genes. The integrator complex provides a quality checkpoint during transcription elongation by driving premature transcription termination of transcripts that are unfavorably configured for transcriptional elongation: the complex terminates transcription by (1) catalyzing dephosphorylation of the C-terminal domain (CTD) of Pol II subunit POLR2A/RPB1 and SUPT5H/SPT5, (2) degrading the exiting nascent RNA transcript via endonuclease activity and (3) promoting the release of Pol II from bound DNA. The integrator complex is also involved in terminating the synthesis of non-coding Pol II transcripts, such as enhancer RNAs (eRNAs), small nuclear RNAs (snRNAs), telomerase RNAs and long non-coding RNAs (lncRNAs). Within the integrator complex, INTS8 is required for the recruitment of protein phosphatase 2A (PP2A) to transcription pause-release checkpoint. This chain is Integrator complex subunit 8 (ints8), found in Xenopus laevis (African clawed frog).